Here is a 100-residue protein sequence, read N- to C-terminus: Urease subunit gamma 2 (100 aa).

Belongs to the urease gamma subunit family. As to quaternary structure, heterotrimer of UreA (gamma), UreB (beta) and UreC (alpha) subunits. Three heterotrimers associate to form the active enzyme.

The protein localises to the cytoplasm. It catalyses the reaction urea + 2 H2O + H(+) = hydrogencarbonate + 2 NH4(+). The protein operates within nitrogen metabolism; urea degradation; CO(2) and NH(3) from urea (urease route): step 1/1. This is Urease subunit gamma 2 from Psychrobacter cryohalolentis (strain ATCC BAA-1226 / DSM 17306 / VKM B-2378 / K5).